The primary structure comprises 57 residues: DNA-directed RNA polymerase subunit Rpo6 (57 aa).

It belongs to the archaeal Rpo6/eukaryotic RPB6 RNA polymerase subunit family. Part of the RNA polymerase complex.

It is found in the cytoplasm. The enzyme catalyses RNA(n) + a ribonucleoside 5'-triphosphate = RNA(n+1) + diphosphate. In terms of biological role, DNA-dependent RNA polymerase (RNAP) catalyzes the transcription of DNA into RNA using the four ribonucleoside triphosphates as substrates. The sequence is that of DNA-directed RNA polymerase subunit Rpo6 from Pyrococcus abyssi (strain GE5 / Orsay).